The following is a 1767-amino-acid chain: Endo-alpha-N-acetylgalactosaminidase (1767 aa).

The N-terminal stretch at 1–39 (MNKGLFEKRCKYSIRKFSLGVASVMIGATFFGTSPVLAD) is a signal peptide. 2 stretches are compositionally biased toward basic and acidic residues: residues 63–75 (NDGH…KVGE) and 84–111 (DGPK…DKPA). Disordered stretches follow at residues 63–137 (NDGH…QGTV) and 301–324 (VKTD…GPEV). Low complexity predominate over residues 112 to 124 (AAKPETPKTVTPE). Basic and acidic residues-rich tracts occupy residues 127–137 (TVEKKEQQGTV) and 304–324 (DNQE…GPEV). Asp577, Asn579, Asp581, Lys583, and Asp588 together coordinate Ca(2+). The catalytic stretch occupies residues 602-893 (GWKKVKDITA…DVMTKYFQHF (292 aa)). Asp658 contributes to the substrate binding site. Asp764 acts as the Nucleophile in catalysis. The active-site Proton donor/acceptor is Glu796. Ca(2+) contacts are provided by Asp1233, Glu1235, Glu1281, Trp1284, and Asp1411. The LPXTG sorting signal motif lies at 1735-1739 (LPATG). Thr1738 carries the post-translational modification Pentaglycyl murein peptidoglycan amidated threonine. Residues 1739–1767 (GESQFDTALFLASVSLALSALFVVKTKKD) constitute a propeptide, removed by sortase.

It belongs to the glycosyl hydrolase 101 family. A subfamily.

It is found in the secreted. It localises to the cell wall. The catalysed reaction is a 3-O-[beta-D-galactosyl-(1-&gt;3)-N-acetyl-alpha-D-galactosaminyl]-L-threonyl-[protein] + H2O = beta-D-galactosyl-(1-&gt;3)-N-acetyl-D-galactosamine + L-threonyl-[protein]. It catalyses the reaction a 3-O-[beta-D-galactosyl-(1-&gt;3)-N-acetyl-alpha-D-galactosaminyl]-L-seryl-[protein] + H2O = beta-D-galactosyl-(1-&gt;3)-N-acetyl-D-galactosamine + L-seryl-[protein]. In terms of biological role, involved in the breakdown of mucin-type O-linked glycans. Specifically removes the T-antigen disaccharide (Gal-beta-1,3-GalNAc-alpha) from extracellular host glycoproteins. Representative of a broadly important class of virulence factors. This Streptococcus pneumoniae (strain ATCC BAA-255 / R6) protein is Endo-alpha-N-acetylgalactosaminidase.